Reading from the N-terminus, the 193-residue chain is Selenoprotein S A (193 aa).

The chain crosses the membrane as a helical span at residues 29–49; sequence WALASYGWYILFGCIILYFLI. Over residues 114 to 125 the composition is skewed to basic and acidic residues; it reads IETWDRMQEGKS. Residues 114–193 form a disordered region; the sequence is IETWDRMQEG…RRGPSSGGUG (80 aa). A compositionally biased stretch (low complexity) spans 137–153; that stretch reads SPSTSASSSPSTSSSAP. Residue Sec-192 is a non-standard amino acid, selenocysteine.

This sequence belongs to the selenoprotein S family.

It is found in the endoplasmic reticulum membrane. The protein localises to the cytoplasm. Its function is as follows. Involved in the degradation process of misfolded endoplasmic reticulum (ER) luminal proteins. Participates in the transfer of misfolded proteins from the ER to the cytosol, where they are destroyed by the proteasome in a ubiquitin-dependent manner. The polypeptide is Selenoprotein S A (vimp-a) (Xenopus laevis (African clawed frog)).